The sequence spans 417 residues: Succinate--CoA ligase [ADP-forming] subunit beta, mitochondrial (417 aa).

The N-terminal 24 residues, 1–24 (MLRKLANQSLSVAGKWQQQQLRRL), are a transit peptide targeting the mitochondrion. The ATP-grasp domain occupies 32-275 (AELMSKYGIN…SSQEDPREVA (244 aa)). Residues K71, 78–80 (GRG), and E138 contribute to the ATP site. Mg(2+) is bound by residues N230 and D244. Residues N295 and 352–354 (GIM) contribute to the substrate site.

The protein belongs to the succinate/malate CoA ligase beta subunit family. As to quaternary structure, heterodimer of an alpha and a beta subunit. Requires Mg(2+) as cofactor. As to expression, expressed in roots, stems, flowers, leaves and fruits.

It is found in the mitochondrion. It carries out the reaction succinate + ATP + CoA = succinyl-CoA + ADP + phosphate. It functions in the pathway carbohydrate metabolism; tricarboxylic acid cycle; succinate from succinyl-CoA (ligase route): step 1/1. Functionally, succinyl-CoA synthetase functions in the citric acid cycle (TCA), coupling the hydrolysis of succinyl-CoA to the synthesis of ATP and thus represents the only step of substrate-level phosphorylation in the TCA. The beta subunit provides nucleotide specificity of the enzyme and binds the substrate succinate, while the binding sites for coenzyme A and phosphate are found in the alpha subunit. In Solanum lycopersicum (Tomato), this protein is Succinate--CoA ligase [ADP-forming] subunit beta, mitochondrial.